The sequence spans 218 residues: UPF0598 protein C8orf82 homolog (218 aa).

The protein belongs to the UPF0598 family.

The chain is UPF0598 protein C8orf82 homolog from Rattus norvegicus (Rat).